The sequence spans 373 residues: S-adenosylmethionine:tRNA ribosyltransferase-isomerase (373 aa).

The protein belongs to the QueA family. In terms of assembly, monomer.

Its subcellular location is the cytoplasm. The enzyme catalyses 7-aminomethyl-7-carbaguanosine(34) in tRNA + S-adenosyl-L-methionine = epoxyqueuosine(34) in tRNA + adenine + L-methionine + 2 H(+). It functions in the pathway tRNA modification; tRNA-queuosine biosynthesis. In terms of biological role, transfers and isomerizes the ribose moiety from AdoMet to the 7-aminomethyl group of 7-deazaguanine (preQ1-tRNA) to give epoxyqueuosine (oQ-tRNA). The polypeptide is S-adenosylmethionine:tRNA ribosyltransferase-isomerase (Prochlorococcus marinus (strain MIT 9515)).